Consider the following 403-residue polypeptide: Tyrosine--tRNA ligase (403 aa).

Residues 42–51 (PTAPDLHLGH) carry the 'HIGH' region motif. The short motif at 226–230 (KMSKS) is the 'KMSKS' region element. Lys229 serves as a coordination point for ATP. One can recognise an S4 RNA-binding domain in the interval 339-400 (LRIASLLTAA…GKRNFARVAL (62 aa)).

Belongs to the class-I aminoacyl-tRNA synthetase family. TyrS type 2 subfamily. Homodimer.

It is found in the cytoplasm. It carries out the reaction tRNA(Tyr) + L-tyrosine + ATP = L-tyrosyl-tRNA(Tyr) + AMP + diphosphate + H(+). In terms of biological role, catalyzes the attachment of tyrosine to tRNA(Tyr) in a two-step reaction: tyrosine is first activated by ATP to form Tyr-AMP and then transferred to the acceptor end of tRNA(Tyr). In Xanthomonas campestris pv. campestris (strain ATCC 33913 / DSM 3586 / NCPPB 528 / LMG 568 / P 25), this protein is Tyrosine--tRNA ligase.